A 102-amino-acid polypeptide reads, in one-letter code: Small ribosomal subunit protein uS10 (102 aa).

Belongs to the universal ribosomal protein uS10 family. As to quaternary structure, part of the 30S ribosomal subunit.

Its function is as follows. Involved in the binding of tRNA to the ribosomes. The sequence is that of Small ribosomal subunit protein uS10 from Dehalococcoides mccartyi (strain ATCC BAA-2266 / KCTC 15142 / 195) (Dehalococcoides ethenogenes (strain 195)).